Reading from the N-terminus, the 286-residue chain is Translocon-associated protein subunit alpha (286 aa).

Residues M1 to T18 form the signal peptide. Residues V19 to T207 lie on the Lumenal side of the membrane. A compositionally biased stretch (acidic residues) spans E39 to G75. A disordered region spans residues E39–A83. N-linked (GlcNAc...) asparagine glycosylation is found at N136 and N191. The chain crosses the membrane as a helical span at residues I208–L228. The Cytoplasmic portion of the chain corresponds to L229–E286. S247 carries the phosphoserine modification. At T260 the chain carries Phosphothreonine. The tract at residues L261–E286 is disordered. Phosphoserine is present on S268. The span at S268 to K279 shows a compositional bias: basic residues.

It belongs to the TRAP-alpha family. In terms of assembly, heterotetramer of TRAP-alpha, TRAP-beta, TRAP-delta and TRAP-gamma. Interacts with palmitoylated calnexin (CALX), the interaction is required for efficient folding of glycosylated proteins.

It is found in the endoplasmic reticulum membrane. Functionally, TRAP proteins are part of a complex whose function is to bind calcium to the ER membrane and thereby regulate the retention of ER resident proteins. May be involved in the recycling of the translocation apparatus after completion of the translocation process or may function as a membrane-bound chaperone facilitating folding of translocated proteins. In Homo sapiens (Human), this protein is Translocon-associated protein subunit alpha (SSR1).